The following is a 616-amino-acid chain: E3 ubiquitin-protein ligase DTX4 (616 aa).

WWE domains follow at residues 1–78 (MLLA…PVRR) and 79–155 (NYYD…RVRR). Disordered regions lie at residues 223-254 (VGKL…PSQV) and 355-387 (PPPV…GKTP). The segment covering 375–384 (KTTKKQAKKG) has biased composition (basic residues). The segment at 406-465 (CTICMERLTAPSGYKGPQPTVKPDLVGKLSRCGHIYHIYCLVAMYNNGNKDGSLQCPTCK) adopts an RING-type; atypical zinc-finger fold.

This sequence belongs to the Deltex family. In terms of assembly, interacts with NLRP4. As to expression, expressed in brain, testis, embryonic fibroblasts and thymocytes.

The protein localises to the cytoplasm. It carries out the reaction S-ubiquitinyl-[E2 ubiquitin-conjugating enzyme]-L-cysteine + [acceptor protein]-L-lysine = [E2 ubiquitin-conjugating enzyme]-L-cysteine + N(6)-ubiquitinyl-[acceptor protein]-L-lysine.. It participates in protein modification; protein ubiquitination. Functions as a ubiquitin ligase protein in vivo, mediating 'Lys48'-linked polyubiquitination and promoting degradation of TBK1, targeting to TBK1 requires interaction with NLRP4. Regulator of Notch signaling, a signaling pathway involved in cell-cell communications that regulates a broad spectrum of cell-fate determinations. The sequence is that of E3 ubiquitin-protein ligase DTX4 (Dtx4) from Mus musculus (Mouse).